Here is a 439-residue protein sequence, read N- to C-terminus: MPAIAVLAAAAAAWCFLQVESRHLDALAGGAGPNHGNFLDNDQWLSTVSQYDRDKYWNRFRDDDYFRNWNPNKPFDQALDPSKDPCLKVKCSPHKVCVTQDYQTALCVSRKHLLPRQKKGNVAQKHWVGPSNLVKCKPCPVAQSAMVCGSDGHSYTSKCKLEFHACSTGKSLATLCDGPCPCLPEPEPPKHKAERSACTDKELRNLASRLKDWFGALHEDANRVIKPTSSNTAQGRFDTSILPICKDSLGWMFNKLDMNYDLLLDPSEINAIYLDKYEPCIKPLFNSCDSFKDGKLSNNEWCYCFQKPGGLPCQNEMNRIQKLSKGKSLLGAFIPRCNEEGYYKATQCHGSTGQCWCVDKYGNELAGSRKQGAVSCEEEQETSGDFGSGGSVVLLDDLEYERELGPKDKEGKLRVHTRAVTEDDEDEDDDKEDEVGYIW.

Residues 1–21 (MPAIAVLAAAAAAWCFLQVES) form the signal peptide. 5 disulfides stabilise this stretch: C86-C97, C91-C107, C136-C166, C139-C159, and C148-C180. Residues 130-182 (PSNLVKCKPCPVAQSAMVCGSDGHSYTSKCKLEFHACSTGKSLATLCDGPCPC) form the Kazal-like domain. O-linked (GalNAc...) threonine glycosylation is present at T228. Residues 310–376 (GLPCQNEMNR…GSRKQGAVSC (67 aa)) enclose the Thyroglobulin type-1 domain. 3 disulfide bridges follow: C313/C337, C348/C355, and C357/C376. S383 and S388 each carry an O-linked (Xyl...) (glycosaminoglycan) serine glycan. A disordered region spans residues 415–439 (VHTRAVTEDDEDEDDDKEDEVGYIW). The segment covering 422–439 (EDDEDEDDDKEDEVGYIW) has biased composition (acidic residues).

O-glycosylated. Glycosaminoglycan that contains chondroitin sulfate and heparan sulfate.

The protein resides in the secreted. The protein localises to the extracellular space. It is found in the extracellular matrix. May play a role in cell-cell and cell-matrix interactions. May contribute to various neuronal mechanisms in the central nervous system. This Homo sapiens (Human) protein is Testican-1 (SPOCK1).